Here is a 740-residue protein sequence, read N- to C-terminus: Arf-GAP with coiled-coil, ANK repeat and PH domain-containing protein 1 (740 aa).

A BAR domain is found at M1 to Q226. The segment at M1–L382 is required for formation of endosomal tubules when overexpressed with PIP5K1C. The region spanning G265–A360 is the PH domain. The Arf-GAP domain maps to G405–R527. The interval G405 to L740 is required for interaction with GULP1. The C4-type zinc finger occupies C420–C443. At Y485 the chain carries 3'-nitrotyrosine. Residues E525–L566 are prevents interaction with ITGB1 when S-554 is not phosphorylated. The disordered stretch occupies residues E525–H581. Residues G538–R549 are compositionally biased toward pro residues. Position 554 is a phosphoserine; by PKB (S554). ANK repeat units lie at residues D606 to Q635, A639 to A668, and E672 to A702.

In terms of assembly, banana-shaped homodimer laterally assembling into tetramers, the tetramers further pack helically onto the membrane. Interacts with GTP-bound ARF6. Interacts with third cytoplasmic loop of SLC2A4/GLUT4. Interacts with CLTC. Interacts with GULP1. Forms a complex with GDP-bound ARF6 and GULP1. Interacts with ITGB1; required for ITGB1 recycling. Phosphorylation at Ser-554 by PKB is required for interaction with ITGB1, export of ITGB1 from recycling endosomes to the cell surface and ITGB1-dependent cell migration. In terms of tissue distribution, highest level in lung and spleen. Low level in heart, kidney, liver and pancreas.

The protein localises to the recycling endosome membrane. Its activity is regulated as follows. GAP activity stimulated by phosphatidylinositol 4,5-bisphosphate (PIP2) and phosphatidic acid. In terms of biological role, GTPase-activating protein (GAP) for ADP ribosylation factor 6 (ARF6) required for clathrin-dependent export of proteins from recycling endosomes to trans-Golgi network and cell surface. Required for regulated export of ITGB1 from recycling endosomes to the cell surface and ITGB1-dependent cell migration. This is Arf-GAP with coiled-coil, ANK repeat and PH domain-containing protein 1 (ACAP1) from Homo sapiens (Human).